The sequence spans 117 residues: Heat shock 70 kDa protein 1-like (117 aa).

ATP is bound by residues Glu-72 to Lys-75 and Gly-84 to Arg-87.

The protein belongs to the heat shock protein 70 family. As to quaternary structure, interacts with PRKN. In terms of tissue distribution, detected at higher levels in caput epididymal spermatazoa than in cauda epididymal spermatazoa (at protein level).

Functionally, molecular chaperone implicated in a wide variety of cellular processes, including protection of the proteome from stress, folding and transport of newly synthesized polypeptides, activation of proteolysis of misfolded proteins and the formation and dissociation of protein complexes. Plays a pivotal role in the protein quality control system, ensuring the correct folding of proteins, the re-folding of misfolded proteins and controlling the targeting of proteins for subsequent degradation. This is achieved through cycles of ATP binding, ATP hydrolysis and ADP release, mediated by co-chaperones. The affinity for polypeptides is regulated by its nucleotide bound state. In the ATP-bound form, it has a low affinity for substrate proteins. However, upon hydrolysis of the ATP to ADP, it undergoes a conformational change that increases its affinity for substrate proteins. It goes through repeated cycles of ATP hydrolysis and nucleotide exchange, which permits cycles of substrate binding and release. Positive regulator of PRKN translocation to damaged mitochondria. In Mesocricetus auratus (Golden hamster), this protein is Heat shock 70 kDa protein 1-like.